A 488-amino-acid polypeptide reads, in one-letter code: Rhamnulokinase (488 aa).

Residue 13–17 (ASSGR) coordinates ATP. A disulfide bridge connects residues Cys-68 and Cys-222. Residues Gly-83 and 236–238 (HDT) each bind substrate. The active-site Proton acceptor is the Asp-237. Residue Thr-259 participates in ATP binding. A substrate-binding site is contributed by Asn-296. Position 304 (Gln-304) interacts with ATP. Cys-353 and Cys-370 are disulfide-bonded. Gly-402 contributes to the ATP binding site. Cys-413 and Cys-417 form a disulfide bridge.

It belongs to the rhamnulokinase family. Mg(2+) serves as cofactor.

The catalysed reaction is L-rhamnulose + ATP = L-rhamnulose 1-phosphate + ADP + H(+). The protein operates within carbohydrate degradation; L-rhamnose degradation; glycerone phosphate from L-rhamnose: step 2/3. Involved in the catabolism of L-rhamnose (6-deoxy-L-mannose). Catalyzes the transfer of the gamma-phosphate group from ATP to the 1-hydroxyl group of L-rhamnulose to yield L-rhamnulose 1-phosphate. The protein is Rhamnulokinase of Klebsiella pneumoniae subsp. pneumoniae (strain ATCC 700721 / MGH 78578).